A 254-amino-acid polypeptide reads, in one-letter code: UPF0246 protein CPF_2407 (254 aa).

The protein belongs to the UPF0246 family.

The chain is UPF0246 protein CPF_2407 from Clostridium perfringens (strain ATCC 13124 / DSM 756 / JCM 1290 / NCIMB 6125 / NCTC 8237 / Type A).